Here is a 349-residue protein sequence, read N- to C-terminus: Ferredoxin--NADP reductase 1 (349 aa).

FAD is bound by residues Glu36, Lys44, Tyr48, Val88, Leu123, Asp290, and Ser331.

Belongs to the ferredoxin--NADP reductase type 2 family. Homodimer. FAD serves as cofactor.

The catalysed reaction is 2 reduced [2Fe-2S]-[ferredoxin] + NADP(+) + H(+) = 2 oxidized [2Fe-2S]-[ferredoxin] + NADPH. This chain is Ferredoxin--NADP reductase 1, found in Bacillus licheniformis (strain ATCC 14580 / DSM 13 / JCM 2505 / CCUG 7422 / NBRC 12200 / NCIMB 9375 / NCTC 10341 / NRRL NRS-1264 / Gibson 46).